The primary structure comprises 258 residues: Imidazole glycerol phosphate synthase subunit HisF (258 aa).

Residues D12 and D131 contribute to the active site.

The protein belongs to the HisA/HisF family. As to quaternary structure, heterodimer of HisH and HisF.

The protein resides in the cytoplasm. It carries out the reaction 5-[(5-phospho-1-deoxy-D-ribulos-1-ylimino)methylamino]-1-(5-phospho-beta-D-ribosyl)imidazole-4-carboxamide + L-glutamine = D-erythro-1-(imidazol-4-yl)glycerol 3-phosphate + 5-amino-1-(5-phospho-beta-D-ribosyl)imidazole-4-carboxamide + L-glutamate + H(+). Its pathway is amino-acid biosynthesis; L-histidine biosynthesis; L-histidine from 5-phospho-alpha-D-ribose 1-diphosphate: step 5/9. In terms of biological role, IGPS catalyzes the conversion of PRFAR and glutamine to IGP, AICAR and glutamate. The HisF subunit catalyzes the cyclization activity that produces IGP and AICAR from PRFAR using the ammonia provided by the HisH subunit. The sequence is that of Imidazole glycerol phosphate synthase subunit HisF from Nitrosomonas europaea (strain ATCC 19718 / CIP 103999 / KCTC 2705 / NBRC 14298).